A 461-amino-acid chain; its full sequence is ATP synthase subunit beta (461 aa).

Position 151–158 (151–158 (GGAGVGKT)) interacts with ATP.

This sequence belongs to the ATPase alpha/beta chains family. F-type ATPases have 2 components, CF(1) - the catalytic core - and CF(0) - the membrane proton channel. CF(1) has five subunits: alpha(3), beta(3), gamma(1), delta(1), epsilon(1). CF(0) has three main subunits: a(1), b(2) and c(9-12). The alpha and beta chains form an alternating ring which encloses part of the gamma chain. CF(1) is attached to CF(0) by a central stalk formed by the gamma and epsilon chains, while a peripheral stalk is formed by the delta and b chains.

It localises to the cell inner membrane. The catalysed reaction is ATP + H2O + 4 H(+)(in) = ADP + phosphate + 5 H(+)(out). Produces ATP from ADP in the presence of a proton gradient across the membrane. The catalytic sites are hosted primarily by the beta subunits. The chain is ATP synthase subunit beta from Pseudoalteromonas translucida (strain TAC 125).